A 257-amino-acid chain; its full sequence is Small ribosomal subunit protein uS3 (257 aa).

The 74-residue stretch at 39–112 folds into the KH type-2 domain; that stretch reads IRKFLNKKYN…EIVFNVVEVR (74 aa). Residues 217–257 form a disordered region; sequence HEELRKERQSSASSNHGGGKRRPSRKGPRRSQEDAATEGGN. Basic residues predominate over residues 234-245; it reads GGKRRPSRKGPR.

Belongs to the universal ribosomal protein uS3 family. Part of the 30S ribosomal subunit. Forms a tight complex with proteins S10 and S14.

In terms of biological role, binds the lower part of the 30S subunit head. Binds mRNA in the 70S ribosome, positioning it for translation. In Haploplasma axanthum (Acholeplasma axanthum), this protein is Small ribosomal subunit protein uS3.